The sequence spans 108 residues: Holo-[acyl-carrier-protein] synthase (108 aa).

Residues Asp9 and Glu52 each coordinate Mg(2+).

This sequence belongs to the P-Pant transferase superfamily. AcpS family. It depends on Mg(2+) as a cofactor.

It is found in the cytoplasm. The catalysed reaction is apo-[ACP] + CoA = holo-[ACP] + adenosine 3',5'-bisphosphate + H(+). In terms of biological role, transfers the 4'-phosphopantetheine moiety from coenzyme A to a Ser of acyl-carrier-protein. This chain is Holo-[acyl-carrier-protein] synthase, found in Coprothermobacter proteolyticus (strain ATCC 35245 / DSM 5265 / OCM 4 / BT).